Here is a 202-residue protein sequence, read N- to C-terminus: Na(+)-translocating NADH-quinone reductase subunit E (202 aa).

6 helical membrane-spanning segments follow: residues 11–31 (AVFIENMALAFFLGMCTFIAI), 35–55 (VETAIGLGIAVIVVQTITVPA), 79–99 (LSFLGLLSYIGVIAAIVQILE), 114–134 (GVFLPLITVNCAIMGGTLFMV), 144–164 (VVYGMGSGLSWALAIALLAGI), and 180–200 (LGITFITIGLMSLGFMSFSGV).

The protein belongs to the NqrDE/RnfAE family. In terms of assembly, composed of six subunits; NqrA, NqrB, NqrC, NqrD, NqrE and NqrF.

The protein localises to the cell inner membrane. It catalyses the reaction a ubiquinone + n Na(+)(in) + NADH + H(+) = a ubiquinol + n Na(+)(out) + NAD(+). Functionally, NQR complex catalyzes the reduction of ubiquinone-1 to ubiquinol by two successive reactions, coupled with the transport of Na(+) ions from the cytoplasm to the periplasm. NqrA to NqrE are probably involved in the second step, the conversion of ubisemiquinone to ubiquinol. The polypeptide is Na(+)-translocating NADH-quinone reductase subunit E (Stutzerimonas stutzeri (strain A1501) (Pseudomonas stutzeri)).